An 81-amino-acid polypeptide reads, in one-letter code: Trefoil factor 3 (81 aa).

The signal sequence occupies residues 1–22; it reads METRAFWTTLLLVLVAGSSCKA. The P-type domain maps to 31–74; that stretch reads SQCMVPANVRVDCGYPTVTSEQCNNRGCCFDSSIPNVPWCFKPL. Cystine bridges form between Cys-33–Cys-59, Cys-43–Cys-58, and Cys-53–Cys-70.

As to quaternary structure, monomer. Homodimer; disulfide-linked. Expressed in goblet cells of the intestines, and colon, in paraventricular hypothalamus and supraoptic nuclei. Weakly expressed in gastric epithelial cells (at protein level). Expressed by goblet cells of small and large intestinal epithelia, kidney and stomach. Expressed in the paraventricular hypothalamus, arcuate nucleus and amygdala of the brain. Weakly expressed in gastric epithelial cells.

The protein localises to the secreted. It is found in the extracellular space. Its subcellular location is the extracellular matrix. It localises to the cytoplasm. In terms of biological role, involved in the maintenance and repair of the intestinal mucosa. Promotes the mobility of epithelial cells in healing processes (motogen). This Rattus norvegicus (Rat) protein is Trefoil factor 3 (Tff3).